The chain runs to 378 residues: Zinc transporter 7 (378 aa).

The Cytoplasmic segment spans residues 1 to 37; that stretch reads MLPLSIKDDEYKPPKFNLFGKISGWFRSILSDKTSRN. The helical transmembrane segment at 38–58 threads the bilayer; sequence LFFFLCLNLSFAFVELLYGIW. The Lumenal segment spans residues 59-67; sequence SNCLGLISD. A helical membrane pass occupies residues 68 to 88; the sequence is SFHMFFDSTAILAGLAASVIS. Residues 89–102 are Cytoplasmic-facing; the sequence is KWRDNDAFSYGYVR. The helical transmembrane segment at 103-123 threads the bilayer; it reads AEVLAGFVNGLFLIFTAFFIF. The Lumenal portion of the chain corresponds to 124–140; sequence SEGVERALAPPDVHHER. The chain crosses the membrane as a helical span at residues 141 to 161; it reads LLLVSILGFVVNLVGIFVFNH. Positions 161–220 are his-rich loop; that stretch reads HGGHGHSHGSGHGHSHSLFNGALDHSHGHEDHCHSHEAKHGAAHSHDHDHAHGHGHLHSH. The Cytoplasmic segment spans residues 162-238; sequence GGHGHSHGSG…AGPSRQILQG (77 aa). The segment covering 186 to 223 has biased composition (basic and acidic residues); the sequence is SHGHEDHCHSHEAKHGAAHSHDHDHAHGHGHLHSHDGP. A disordered region spans residues 186–224; it reads SHGHEDHCHSHEAKHGAAHSHDHDHAHGHGHLHSHDGPS. The chain crosses the membrane as a helical span at residues 239 to 259; it reads VFLHILADTLGSIGVIASAIM. The Lumenal portion of the chain corresponds to 260–264; that stretch reads MQNFG. Residues 265-285 form a helical membrane-spanning segment; it reads LMIADPICSILIAILIVVSVI. Topologically, residues 286 to 378 are cytoplasmic; that stretch reads PLLRESVGIL…LYVQIDFAAM (93 aa).

It belongs to the cation diffusion facilitator (CDF) transporter (TC 2.A.4) family. SLC30A subfamily. In terms of assembly, homooligomer. In terms of tissue distribution, highly expressed in liver, spleen, duodenum and part of the jejunum of small intestine (at protein level). Moderately expressed in kidney, lung, and brain. Barely detectable in heart. In brain, expressed in cerebellum, cerebral cortex and hippocampus (at protein level).

Its subcellular location is the golgi apparatus membrane. It localises to the cytoplasmic vesicle. The protein localises to the golgi apparatus. It is found in the trans-Golgi network. The protein resides in the sarcoplasmic reticulum. Its subcellular location is the mitochondrion. The catalysed reaction is Zn(2+)(in) = Zn(2+)(out). Zinc ion transporter mediating zinc entry from the cytosol into the lumen of organelles along the secretory pathway. By contributing to zinc ion homeostasis within the early secretory pathway, regulates the activation and folding of enzymes like alkaline phosphatases. This chain is Zinc transporter 7, found in Mus musculus (Mouse).